We begin with the raw amino-acid sequence, 307 residues long: Pyridoxal 5'-phosphate synthase subunit PdxS (307 aa).

Positions 1 to 10 (MRGQPRPKLR) are enriched in basic residues. The segment at 1 to 20 (MRGQPRPKLRRMTEQQTGTP) is disordered. Asp-37 provides a ligand contact to D-ribose 5-phosphate. The active-site Schiff-base intermediate with D-ribose 5-phosphate is the Lys-94. Gly-166 is a binding site for D-ribose 5-phosphate. Arg-178 is a binding site for D-glyceraldehyde 3-phosphate. Residues Gly-227 and 248–249 (GS) each bind D-ribose 5-phosphate.

Belongs to the PdxS/SNZ family. In the presence of PdxT, forms a dodecamer of heterodimers.

It catalyses the reaction aldehydo-D-ribose 5-phosphate + D-glyceraldehyde 3-phosphate + L-glutamine = pyridoxal 5'-phosphate + L-glutamate + phosphate + 3 H2O + H(+). It participates in cofactor biosynthesis; pyridoxal 5'-phosphate biosynthesis. Catalyzes the formation of pyridoxal 5'-phosphate from ribose 5-phosphate (RBP), glyceraldehyde 3-phosphate (G3P) and ammonia. The ammonia is provided by the PdxT subunit. Can also use ribulose 5-phosphate and dihydroxyacetone phosphate as substrates, resulting from enzyme-catalyzed isomerization of RBP and G3P, respectively. The protein is Pyridoxal 5'-phosphate synthase subunit PdxS of Deinococcus radiodurans (strain ATCC 13939 / DSM 20539 / JCM 16871 / CCUG 27074 / LMG 4051 / NBRC 15346 / NCIMB 9279 / VKM B-1422 / R1).